Reading from the N-terminus, the 255-residue chain is tRNA (guanine-N(1)-)-methyltransferase (255 aa).

S-adenosyl-L-methionine contacts are provided by residues Gly113 and 133 to 138 (IGDYVL).

The protein belongs to the RNA methyltransferase TrmD family. As to quaternary structure, homodimer.

It localises to the cytoplasm. It catalyses the reaction guanosine(37) in tRNA + S-adenosyl-L-methionine = N(1)-methylguanosine(37) in tRNA + S-adenosyl-L-homocysteine + H(+). Specifically methylates guanosine-37 in various tRNAs. This Escherichia coli O127:H6 (strain E2348/69 / EPEC) protein is tRNA (guanine-N(1)-)-methyltransferase.